The chain runs to 124 residues: Urease subunit beta (124 aa).

It belongs to the urease beta subunit family. As to quaternary structure, heterotrimer of UreA (gamma), UreB (beta) and UreC (alpha) subunits. Three heterotrimers associate to form the active enzyme.

The protein localises to the cytoplasm. It carries out the reaction urea + 2 H2O + H(+) = hydrogencarbonate + 2 NH4(+). The protein operates within nitrogen metabolism; urea degradation; CO(2) and NH(3) from urea (urease route): step 1/1. The chain is Urease subunit beta from Ureaplasma urealyticum serovar 10 (strain ATCC 33699 / Western).